The chain runs to 393 residues: Staphopain B (393 aa).

Positions 1–36 are cleaved as a signal peptide; the sequence is MNSSYKSRVFNIISIIMVSMLILSLGAFANNNKAKA. A propeptide spanning residues 37-219 is cleaved from the precursor; it reads DSHSKQLEIN…KVEENEAIQE (183 aa). Active-site residues include C243, H340, and N360.

The protein belongs to the peptidase C47 family. In terms of assembly, in the cytoplasm, prematurely activated/folded SspB forms a stable non-covalent complex with SspC. Proteolytically cleaved by staphylococcal serine protease (SspA).

It localises to the secreted. With respect to regulation, prematurely activated/folded staphopain B is inhibited by staphostatin B (SspC), which is probably required to protect staphylococcal cytoplasmic proteins from degradation by SspB. Functionally, cysteine protease that plays an important role in the inhibition of host innate immune response. Degrades host elastin, fibrogen, fibronectin and kininogen. Blocks phagocytosis of opsonised S.aureus by neutrophils and monocytes by inducing their death in a proteolytic activity-dependent manner. Decreases surface expression of the 'don't eat me' signal CD31 on neutrophils. Cleaves host galectin-3/LGALS3, thereby inhibiting the neutrophil-activating ability of the lectin. The chain is Staphopain B (sspB) from Staphylococcus aureus (strain Mu50 / ATCC 700699).